The primary structure comprises 381 residues: E3 ubiquitin-protein ligase RNF34 (381 aa).

An FYVE-type zinc finger spans residues 56–107 (EGPNIVCKACGLSFSVFRKKHVCCDCKKDFCSLCSVSQENLRRCSTCHLLQE). The SAP 1 domain occupies 115–134 (LMRLKVKDLRQYLLLRNVPT). S169 carries the phosphoserine modification. The disordered stretch occupies residues 216–261 (LASANTDDEDGEEDDDDDDDDDDEDDDEQEENLEEQNPGLSKKKAR). Over residues 221 to 249 (TDDEDGEEDDDDDDDDDDEDDDEQEENLE) the composition is skewed to acidic residues. S263 and S265 each carry phosphoserine. One can recognise an SAP 2 domain in the interval 273-287 (VEGMSVRQLKEILAR). An RING-type zinc finger spans residues 334-369 (CRICMDAVIDCVLLECGHMVTCTKCGKRMSECPICR).

Interacts with CASP8 and CASP10. Interacts with p53/TP53; involved in p53/TP53 ubiquitination. Interacts (via RING-type zinc finger) with MDM2; the interaction stabilizes MDM2. Interacts (via RING-type zinc finger) with PPARGC1A. Interacts with NOD1. Post-translationally, proteolytically cleaved by caspases upon induction of apoptosis by TNF. In terms of processing, autoubiquitinated (in vitro). As to expression, ubiquitous. Detected in brain, cerebellum, midbrain, hippocampus, striatum, heart, lung, kidney, muscle, spleen and testis.

The protein localises to the cell membrane. The protein resides in the endomembrane system. Its subcellular location is the nucleus. It localises to the nucleus speckle. It is found in the cytoplasm. The protein localises to the cytosol. The catalysed reaction is S-ubiquitinyl-[E2 ubiquitin-conjugating enzyme]-L-cysteine + [acceptor protein]-L-lysine = [E2 ubiquitin-conjugating enzyme]-L-cysteine + N(6)-ubiquitinyl-[acceptor protein]-L-lysine.. The protein operates within protein modification; protein ubiquitination. Its function is as follows. E3 ubiquitin-protein ligase that regulates several biological processes through the ubiquitin-mediated proteasomal degradation of various target proteins. Ubiquitinates the caspases CASP8 and CASP10, promoting their proteasomal degradation, to negatively regulate cell death downstream of death domain receptors in the extrinsic pathway of apoptosis. May mediate 'Lys-48'-linked polyubiquitination of RIPK1 and its subsequent proteasomal degradation thereby indirectly regulating the tumor necrosis factor-mediated signaling pathway. Negatively regulates p53/TP53 through its direct ubiquitination and targeting to proteasomal degradation. Indirectly, may also negatively regulate p53/TP53 through ubiquitination and degradation of SFN. Mediates PPARGC1A proteasomal degradation probably through ubiquitination thereby indirectly regulating the metabolism of brown fat cells. Possibly involved in innate immunity, through 'Lys-48'-linked polyubiquitination of NOD1 and its subsequent proteasomal degradation. This is E3 ubiquitin-protein ligase RNF34 from Rattus norvegicus (Rat).